Here is a 444-residue protein sequence, read N- to C-terminus: Homogentisate 1,2-dioxygenase (444 aa).

His-298 functions as the Proton acceptor in the catalytic mechanism. The Fe cation site is built by His-341 and Glu-347. Homogentisate-binding residues include Tyr-356 and His-377. Fe cation is bound at residue His-377.

This sequence belongs to the homogentisate dioxygenase family. In terms of assembly, hexamer; dimer of trimers. Requires Fe cation as cofactor.

The catalysed reaction is homogentisate + O2 = 4-maleylacetoacetate + H(+). It participates in amino-acid degradation; L-phenylalanine degradation; acetoacetate and fumarate from L-phenylalanine: step 4/6. Functionally, involved in the catabolism of homogentisate (2,5-dihydroxyphenylacetate or 2,5-OH-PhAc), a central intermediate in the degradation of phenylalanine and tyrosine. Catalyzes the oxidative ring cleavage of the aromatic ring of homogentisate to yield maleylacetoacetate. This is Homogentisate 1,2-dioxygenase from Burkholderia cenocepacia (strain ATCC BAA-245 / DSM 16553 / LMG 16656 / NCTC 13227 / J2315 / CF5610) (Burkholderia cepacia (strain J2315)).